A 545-amino-acid chain; its full sequence is Calcium-dependent protein kinase 6 (545 aa).

Residue Gly2 is the site of N-myristoyl glycine attachment. The segment covering Cys34–Ser43 has biased composition (low complexity). A disordered region spans residues Cys34 to Ser58. One can recognise a Protein kinase domain in the interval Tyr74–Val332. ATP contacts are provided by residues Leu80–Thr88 and Lys103. Asp198 (proton acceptor) is an active-site residue. Positions Ala338 to Ile368 are autoinhibitory domain. EF-hand domains follow at residues Glu375–Asn410, Leu411–Leu446, Glu447–Ala482, and Ile486–Asp516. The Ca(2+) site is built by Asp388, Asp390, Ser392, Glu399, Asp424, Asp426, Ser428, Thr430, Glu435, Asp460, Asp462, Ser464, Tyr466, Glu471, Asp494, Asp496, Asp498, Arg500, and Glu505. The disordered stretch occupies residues Gly526–Arg545. Residues Pro528–Arg545 show a composition bias toward low complexity.

It belongs to the protein kinase superfamily. Ser/Thr protein kinase family. CDPK subfamily.

Its subcellular location is the membrane. It carries out the reaction L-seryl-[protein] + ATP = O-phospho-L-seryl-[protein] + ADP + H(+). The catalysed reaction is L-threonyl-[protein] + ATP = O-phospho-L-threonyl-[protein] + ADP + H(+). Its activity is regulated as follows. Activated by calcium. Autophosphorylation may play an important role in the regulation of the kinase activity. Its function is as follows. May play a role in signal transduction pathways that involve calcium as a second messenger. In Oryza sativa subsp. japonica (Rice), this protein is Calcium-dependent protein kinase 6.